The chain runs to 360 residues: Pyrimidine monooxygenase RutA (360 aa).

FMN is bound by residues 49-50 (IK), N115, E124, 140-141 (RY), and S190.

Belongs to the NtaA/SnaA/DszA monooxygenase family. RutA subfamily.

The catalysed reaction is uracil + FMNH2 + NADH + O2 = (Z)-3-ureidoacrylate + FMN + NAD(+) + H2O + H(+). The enzyme catalyses thymine + FMNH2 + NADH + O2 = (Z)-2-methylureidoacrylate + FMN + NAD(+) + H2O + H(+). Catalyzes the pyrimidine ring opening between N-3 and C-4 by an unusual flavin hydroperoxide-catalyzed mechanism, adding oxygen atoms in the process to yield ureidoacrylate peracid, that immediately reacts with FMN forming ureidoacrylate and FMN-N(5)-oxide. The FMN-N(5)-oxide reacts spontaneously with NADH to produce FMN. Requires the flavin reductase RutF to regenerate FMN in vivo. The chain is Pyrimidine monooxygenase RutA from Pseudomonas syringae pv. syringae (strain B728a).